Reading from the N-terminus, the 440-residue chain is Chromosome partition protein MukF (440 aa).

The tract at residues 208 to 236 is leucine-zipper; the sequence is LSETSGTLRELQDTLEAAGDKLQANLLRI.

This sequence belongs to the MukF family. In terms of assembly, interacts, and probably forms a ternary complex, with MukE and MukB via its C-terminal region. The complex formation is stimulated by calcium or magnesium. It is required for an interaction between MukE and MukB.

The protein localises to the cytoplasm. The protein resides in the nucleoid. In terms of biological role, involved in chromosome condensation, segregation and cell cycle progression. May participate in facilitating chromosome segregation by condensation DNA from both sides of a centrally located replisome during cell division. Not required for mini-F plasmid partitioning. Probably acts via its interaction with MukB and MukE. Overexpression results in anucleate cells. It has a calcium binding activity. The chain is Chromosome partition protein MukF from Salmonella arizonae (strain ATCC BAA-731 / CDC346-86 / RSK2980).